We begin with the raw amino-acid sequence, 259 residues long: Dihydroorotate dehydrogenase B (NAD(+)), electron transfer subunit (259 aa).

Residues 2 to 102 (MQKQNMIVVN…LGPLGHGFPV (101 aa)) enclose the FAD-binding FR-type domain. Residues 53 to 56 (RPIS), 70 to 72 (LYR), and 77 to 78 (GT) each bind FAD. Residues cysteine 221, cysteine 226, cysteine 229, and cysteine 246 each contribute to the [2Fe-2S] cluster site.

The protein belongs to the PyrK family. Heterotetramer of 2 PyrK and 2 PyrD type B subunits. The cofactor is [2Fe-2S] cluster. Requires FAD as cofactor.

It functions in the pathway pyrimidine metabolism; UMP biosynthesis via de novo pathway; orotate from (S)-dihydroorotate (NAD(+) route): step 1/1. Functionally, responsible for channeling the electrons from the oxidation of dihydroorotate from the FMN redox center in the PyrD type B subunit to the ultimate electron acceptor NAD(+). In Bacillus cereus (strain ATCC 14579 / DSM 31 / CCUG 7414 / JCM 2152 / NBRC 15305 / NCIMB 9373 / NCTC 2599 / NRRL B-3711), this protein is Dihydroorotate dehydrogenase B (NAD(+)), electron transfer subunit.